The chain runs to 391 residues: Phosphoprotein (391 aa).

A phosphothreonine mark is found at Thr10 and Thr16. Residues 54 to 65 are compositionally biased toward polar residues; the sequence is QKNIQHPTASHQ. Disordered stretches follow at residues 54–98 and 145–186; these read QKNI…EPLF and TSTP…RSGS. Position 69 is a phosphoserine (Ser69). 3 positions are modified to phosphothreonine: Thr91, Thr150, and Thr165. Ser188 bears the Phosphoserine mark. Residues 218–245 are a coiled coil; the sequence is ANEIMDLLRGMDARLQHLEQKVDKVLAQ. Thr250 carries the post-translational modification Phosphothreonine. Ser257 carries the phosphoserine modification. Phosphothreonine occurs at positions 258 and 282. Ser292 and Ser294 each carry phosphoserine. Thr298 carries the post-translational modification Phosphothreonine. Residues Ser301 and Ser374 each carry the phosphoserine modification. The interval 343-391 is interaction with the nucleoprotein; sequence AGRKVMITKMITDCVANPQMKQAFEQRLAKASTEDALNDIKRDIIRNAI. Position 375 is a phosphothreonine (Thr375).

The protein belongs to the rubulavirus/avulavirus P protein family. As to quaternary structure, homotetramer. Interacts (via multimerization domain) with polymerase L; this interaction forms the polymerase L-P complex. Interacts (via N-terminus) with N0 (via Ncore); this interaction allows P to chaperon N0 to avoid N polymerization before encapsidation. Interacts (via C-terminus) with N-RNA template; this interaction positions the polymerase on the template for both transcription and replication. Interacts with host RPS6KB1 kinase; this interaction may play a role in the viral replication and transcription.

The protein localises to the virion. Its function is as follows. Essential cofactor of the RNA polymerase L that plays a central role in the transcription and replication by forming the polymerase complex with RNA polymerase L and recruiting L to the genomic N-RNA template for RNA synthesis. Also plays a central role in the encapsidation of nascent RNA chains by forming the encapsidation complex with the nucleocapsid protein N (N-P complex). Acts as a chaperone for newly synthesized free N protein, so-called N0, allowing encapsidation of nascent RNA chains during replication. The nucleoprotein protein N prevents excessive phosphorylation of P, which leads to down-regulation of viral transcription/ replication. Participates, together with N, in the formation of viral factories (viroplasms), which are large inclusions in the host cytoplasm where replication takes place. This is Phosphoprotein from Mumps virus genotype N (strain L-Zagreb vaccine) (MuV).